A 389-amino-acid chain; its full sequence is MDLKVLKSEIFEHLNNKIIPFWEELKDENNGGYISYVGFDLKPDPYAPKGLVLTSRILWFFSRLYNQLRKEEFINFADHSYKFLIKSFLDKENKGFYWMVDYKGEPIDKRKHLYGQAFVLYGLSEYYKATQKKESLDLALEIYKIIEEVCKNDVGYKEEFDEKWNPKENIIVSEYGIICERSMNTLLHILEAYTNLFTATYDQSIKKKIEDLIILFKEKIYDSKTNHLYVFFDKKMNPIIDAISYGHDIEATWLIDEALRYIDNNKLIKEMSEINLKIAEKVLEEAFESGSLLNERVRGIVDKNRIWWVQAEALVGFLNAYQKSKLDKFLKAVFELWEFIKDFLVDKRAQGEWFWKLDENYIPSPMPEVDLWKCPYHNGRMCLEVIKRI.

The protein belongs to the cellobiose 2-epimerase family. In terms of assembly, monomer.

It carries out the reaction D-cellobiose = beta-D-glucosyl-(1-&gt;4)-D-mannopyranose. Functionally, catalyzes the reversible epimerization of cellobiose to 4-O-beta-D-glucopyranosyl-D-mannose (Glc-Man). Catalyzes epimerization but also isomerization for beta-1,4- and alpha-1,4-gluco-oligosaccharides. Can use cellobiose, lactose, cellotriose, maltose and maltotriose. The polypeptide is Cellobiose 2-epimerase (Dictyoglomus turgidum (strain DSM 6724 / Z-1310)).